A 115-amino-acid chain; its full sequence is Probable 4-amino-4-deoxy-L-arabinose-phosphoundecaprenol flippase subunit ArnE (115 aa).

3 helical membrane passes run 42 to 62 (PWPW…LLLL), 65 to 85 (VEVG…TLAA), and 93 to 112 (VDRR…VLLG). Residues 46–113 (LALLALGLGL…IVAGVVLLGR (68 aa)) form the EamA domain.

The protein belongs to the ArnE family. In terms of assembly, heterodimer of ArnE and ArnF.

It is found in the cell inner membrane. The protein operates within bacterial outer membrane biogenesis; lipopolysaccharide biosynthesis. Translocates 4-amino-4-deoxy-L-arabinose-phosphoundecaprenol (alpha-L-Ara4N-phosphoundecaprenol) from the cytoplasmic to the periplasmic side of the inner membrane. This Pseudomonas aeruginosa (strain UCBPP-PA14) protein is Probable 4-amino-4-deoxy-L-arabinose-phosphoundecaprenol flippase subunit ArnE.